The primary structure comprises 696 residues: Catalase (696 aa).

Catalysis depends on residues His-64 and Asn-137. The disordered stretch occupies residues 187–211 (SLAQGSQISSERGSPKAYSNTEPNK). Polar residues predominate over residues 189-208 (AQGSQISSERGSPKAYSNTE). Residue Tyr-353 coordinates heme.

It belongs to the catalase family. Requires heme as cofactor.

It carries out the reaction 2 H2O2 = O2 + 2 H2O. In terms of biological role, occurs in almost all aerobically respiring organisms and serves to protect cells from the toxic effects of hydrogen peroxide. This chain is Catalase, found in Penicillium janthinellum (Penicillium vitale).